The primary structure comprises 338 residues: MLTERQLLILQTIVDDFIGSAQPVGSRTLAKKDEITFSPATIRNEMADLEELGFIEKTHSSSGRVPSEKGYRFYVDHLLAPQNLPTDEIVQIKDLFAERIFEAEKIAQQSAQILSELTNYTAIVLGPKLSTNKLKNVQIVPLDRQTAVAIIVTDTGHVQSKTITVPESVDLSDLEKMVNILNEKLSGIPMAELHNKIFKEIVTVLRGYVHNYDSAIKMLDGTFQVPLSEKIYFGGKANMLSQPEFHDIHKVRSLLTMIDNEAAFYDILRHKQVGIQVKIGRENSSTAMEDCSLISATYSIGEEQLGTIAILGPTRMQYSRVISLLQLFTRQFTDGLKK.

This sequence belongs to the HrcA family.

Its function is as follows. Negative regulator of class I heat shock genes (grpE-dnaK-dnaJ and groELS operons). Prevents heat-shock induction of these operons. The polypeptide is Heat-inducible transcription repressor HrcA (Bacillus mycoides (strain KBAB4) (Bacillus weihenstephanensis)).